Reading from the N-terminus, the 101-residue chain is Small ribosomal subunit protein uS14 (101 aa).

Basic and acidic residues predominate over residues 1–10 (MAKKSSVEKN). A disordered region spans residues 1-23 (MAKKSSVEKNNRRKRMAKNAAPK). Over residues 11 to 23 (NRRKRMAKNAAPK) the composition is skewed to basic residues.

The protein belongs to the universal ribosomal protein uS14 family. In terms of assembly, part of the 30S ribosomal subunit. Contacts proteins S3 and S10.

Its function is as follows. Binds 16S rRNA, required for the assembly of 30S particles and may also be responsible for determining the conformation of the 16S rRNA at the A site. The sequence is that of Small ribosomal subunit protein uS14 from Bradyrhizobium sp. (strain BTAi1 / ATCC BAA-1182).